The following is a 631-amino-acid chain: ATP-dependent zinc metalloprotease FtsH (631 aa).

At 1–5 the chain is on the cytoplasmic side; it reads MKKSN. The helical transmembrane segment at 6–26 threads the bilayer; sequence PWFVFFWITLLVIVLMFINFA. At 27–102 the chain is on the periplasmic side; sequence RQGGNEVELE…LEFSATEKSG (76 aa). A helical membrane pass occupies residues 103-123; sequence WLGSLLLNWGPVVLLILFCFW. The Cytoplasmic portion of the chain corresponds to 124–631; sequence MMRGMSMGNK…KVINEKVIIS (508 aa). Position 196–203 (196–203) interacts with ATP; that stretch reads GSPGTGKT. Residue His418 participates in Zn(2+) binding. Residue Glu419 is part of the active site. Residues His422 and Asp494 each contribute to the Zn(2+) site.

This sequence in the central section; belongs to the AAA ATPase family. In the C-terminal section; belongs to the peptidase M41 family. In terms of assembly, homohexamer. The cofactor is Zn(2+).

It is found in the cell inner membrane. Functionally, acts as a processive, ATP-dependent zinc metallopeptidase for both cytoplasmic and membrane proteins. Plays a role in the quality control of integral membrane proteins. This chain is ATP-dependent zinc metalloprotease FtsH, found in Endomicrobium trichonymphae.